The chain runs to 113 residues: Hemerythrin (113 aa).

Fe cation contacts are provided by His25, His54, Glu58, His73, His77, His101, and Asp106.

This sequence belongs to the hemerythrin family. Homotrimer.

Its function is as follows. Hemerythrin is a respiratory protein in blood cells of certain marine worms. The oxygen-binding site in each chain contains two iron atoms. The polypeptide is Hemerythrin (Siphonosoma cumanense (Sipunculan worm)).